A 653-amino-acid chain; its full sequence is Leucine-rich repeat-containing protein 4 (653 aa).

The first 38 residues, 1-38 (MKLLWQVTVHHHTWNAILLPFVYLTAQVWILCAAIAAA), serve as a signal peptide directing secretion. Residues 39–75 (ASAGPQNCPSVCSCSNQFSKVVCTRRGLSEVPQGIPS) enclose the LRRNT domain. The Extracellular portion of the chain corresponds to 39–527 (ASAGPQNCPS…SLDEVMKTTK (489 aa)). Intrachain disulfides connect Cys46–Cys52 and Cys50–Cys61. LRR repeat units follow at residues 76-97 (NTRY…TFRH), 100-121 (HLEV…AFNG), 124-145 (SLNT…AFEY), 148-169 (KLRE…AFNR), 172-194 (SLMR…AFEG), 197-218 (NLKY…TPLV), 219-240 (GLEE…SFHG), 243-264 (SLKK…AFDG), and 267-288 (SLVE…LFTP). N-linked (GlcNAc...) asparagine glycans are attached at residues Asn277, Asn322, Asn363, Asn388, Asn410, Asn434, Asn440, Asn447, and Asn450. Residues 300–352 (NPWNCDCDILWLAWWLREYIPTNSTCCGRCHAPMHMRGRYLVEVDQASFQCSA) enclose the LRRCT domain. 2 disulfides stabilise this stretch: Cys304–Cys329 and Cys306–Cys350. The 90-residue stretch at 353-442 (PFIMDAPRDL…SNASAYLNVS (90 aa)) folds into the Ig-like domain. An intrachain disulfide couples Cys374 to Cys424. A helical membrane pass occupies residues 528–548 (IIIGCFVAVTLLAAAMLIVFY). Over 549–653 (KLRKRHQQRS…TKDKVQETQI (105 aa)) the chain is Cytoplasmic.

As to quaternary structure, interacts with DLG4. Interacts (via LRR repeats) with NTNG2. Forms a complex with DLG4 and with NMDA receptors. Post-translationally, N-glycosylated. As to expression, specifically expressed in brain.

The protein localises to the membrane. It is found in the postsynaptic cell membrane. Functionally, synaptic adhesion protein. Regulates the formation of exitatory synapses through the recruitment of pre-and-postsynaptic proteins. Organize the lamina/pathway-specific differentiation of dendrites. Plays an important role for auditory synaptic responses. Involved in the suppression of glioma. The protein is Leucine-rich repeat-containing protein 4 (LRRC4) of Homo sapiens (Human).